Here is a 471-residue protein sequence, read N- to C-terminus: Putative multidrug resistance protein MdtD (471 aa).

Topologically, residues 1–11 (MTDLPDSTRWQ) are periplasmic. The helical transmembrane segment at 12–32 (LWIVAFGFFMQSLDTTIVNTA) threads the bilayer. The Cytoplasmic portion of the chain corresponds to 33–48 (LPSMAQSLGESPLHMH). The chain crosses the membrane as a helical span at residues 49-69 (MVIVSYVLTVAVMLPASGWLA). At 70 to 76 (DKVGVRN) the chain is on the periplasmic side. A helical transmembrane segment spans residues 77 to 97 (IFFTAIVLFTLGSLFCALSGT). Residues 98-101 (LNEL) are Cytoplasmic-facing. Residues 102–124 (LLARALQGVGGAMMVPVGRLTVM) form a helical membrane-spanning segment. Residues 125–137 (KIVPREQYMAAMT) are Periplasmic-facing. The chain crosses the membrane as a helical span at residues 138–158 (FVTLPGQVGPLLGPALGGLLV). At 159-164 (EYASWH) the chain is on the cytoplasmic side. A helical membrane pass occupies residues 165–185 (WIFLINIPVGIIGAIATLMLM). Residues 186–196 (PNYTMQTRRFD) lie on the Periplasmic side of the membrane. The chain crosses the membrane as a helical span at residues 197-217 (LSGFLLLAVGMAVLTLALDGS). At 218-224 (KGTGLSP) the chain is on the cytoplasmic side. A helical membrane pass occupies residues 225–245 (LAITGLVAVGVVALVLYLLHA). The Periplasmic segment spans residues 246–262 (RNNHRALFSLKLFRTRT). The chain crosses the membrane as a helical span at residues 263–283 (FSLGLAGSFAGRIGSGMLPFM). Residues 284-285 (TP) lie on the Cytoplasmic side of the membrane. A helical membrane pass occupies residues 286–306 (VFLQIGLGFSPFHAGLMMIPM). The Periplasmic segment spans residues 307-341 (VLGSMGMKRIVVQVVNRFGYRRVLVATTLGLSLVT). A helical transmembrane segment spans residues 342–362 (LLFMTTALLGWYYVLPFVLFL). The Cytoplasmic segment spans residues 363–395 (QGMVNSTRFSSMNTLTLKDLPDNLASSGNSLLS). The helical transmembrane segment at 396-416 (MIMQLSMSIGVTIAGLLLGLF) threads the bilayer. The Periplasmic portion of the chain corresponds to 417–430 (GSQHVSVDSGTTQT). A helical transmembrane segment spans residues 431–451 (VFMYTWLSMAFIIALPAFIFA). Residues 452–471 (RVPNDTHQNVAISRRKRSAQ) are Cytoplasmic-facing.

Belongs to the major facilitator superfamily. TCR/Tet family.

The protein resides in the cell inner membrane. This chain is Putative multidrug resistance protein MdtD, found in Escherichia coli O127:H6 (strain E2348/69 / EPEC).